Here is a 200-residue protein sequence, read N- to C-terminus: Small ribosomal subunit protein uS4 (200 aa).

The interval 22–42 (TGKELEKRPYAPGPHGPNQRK) is disordered. Residues 92-152 (ARLDNLVYRM…EKSNSLVVVK (61 aa)) enclose the S4 RNA-binding domain.

This sequence belongs to the universal ribosomal protein uS4 family. In terms of assembly, part of the 30S ribosomal subunit. Contacts protein S5. The interaction surface between S4 and S5 is involved in control of translational fidelity.

In terms of biological role, one of the primary rRNA binding proteins, it binds directly to 16S rRNA where it nucleates assembly of the body of the 30S subunit. Its function is as follows. With S5 and S12 plays an important role in translational accuracy. This Bacillus mycoides (strain KBAB4) (Bacillus weihenstephanensis) protein is Small ribosomal subunit protein uS4.